Consider the following 115-residue polypeptide: Movement protein TGB2 (115 aa).

Residues 1 to 13 lie on the Cytoplasmic side of the membrane; it reads MSAQGHRLTAPVN. A helical transmembrane segment spans residues 14–34; that stretch reads SEKVYIVLGLSFALISITFLL. Over 35 to 74 the chain is Lumenal; the sequence is SRNNLPHVGDNIHSLPHGDAYRDGTKAILYNSPNFGSRTS. The helical transmembrane segment at 75-95 threads the bilayer; sequence LNNSKNAAFAAVLLLSLLIYG. Residues 96 to 115 lie on the Cytoplasmic side of the membrane; it reads SRCLSQRNHLCACGNNHSSN.

This sequence belongs to the Tymovirales TGBp2 protein family.

It is found in the host endoplasmic reticulum membrane. Plays a role in viral cell-to-cell propagation, by facilitating genome transport to neighboring plant cells through plasmosdesmata,. In Potato virus X (strain HB) (PVX), this protein is Movement protein TGB2.